Reading from the N-terminus, the 537-residue chain is Phosphoenolpyruvate carboxykinase (ATP) (537 aa).

R61, Y195, and K201 together coordinate substrate. ATP-binding positions include K201, H220, and 236–244 (GLSGTGKTT). Mn(2+)-binding residues include K201 and H220. Residue D257 coordinates Mn(2+). ATP is bound by residues E285, R323, and T448. R323 contacts substrate.

This sequence belongs to the phosphoenolpyruvate carboxykinase (ATP) family. It depends on Mn(2+) as a cofactor.

The protein localises to the cytoplasm. The catalysed reaction is oxaloacetate + ATP = phosphoenolpyruvate + ADP + CO2. It participates in carbohydrate biosynthesis; gluconeogenesis. Functionally, involved in the gluconeogenesis. Catalyzes the conversion of oxaloacetate (OAA) to phosphoenolpyruvate (PEP) through direct phosphoryl transfer between the nucleoside triphosphate and OAA. The protein is Phosphoenolpyruvate carboxykinase (ATP) of Rhodopseudomonas palustris (strain ATCC BAA-98 / CGA009).